A 93-amino-acid chain; its full sequence is MVKIRLTRVGAKNKPAYRIVAMDSREPRDGKHLEILGFYDPKTDPATIQLKEERILYWLSQGAQPTDTVLSILKRYGVWDKFLAMKKSAKSSA.

This sequence belongs to the bacterial ribosomal protein bS16 family.

The sequence is that of Small ribosomal subunit protein bS16 from Dictyoglomus turgidum (strain DSM 6724 / Z-1310).